The primary structure comprises 396 residues: Microcin B17-processing protein McbD (396 aa).

The YcaO domain maps to 41–396 (ASAAGETLKS…VRESKMVPFP (356 aa)).

It localises to the cytoplasm. Its function is as follows. Necessary to process the inactive microcin B17 (McbA) precursor into the active peptide. The polypeptide is Microcin B17-processing protein McbD (mcbD) (Escherichia coli).